The sequence spans 437 residues: Oxysterol-binding protein homolog 7 (437 aa).

Over residues 23–32 (IASNAANSKP) the composition is skewed to polar residues. The segment at 23-42 (IASNAANSKPSGADTDDIDE) is disordered. Residues 54-393 (IISQLKPGCD…EDLDYYIYKH (340 aa)) form an OSBP-related domain (ORD) region. Residues 64 to 69 (LSRITL), 126 to 129 (KPLN), and 157 to 158 (HH) contribute to the a 1,2-diacyl-sn-glycero-3-phospho-(1D-myo-inositol 4-phosphate) site. Residues 64–69 (LSRITL) and Asn129 each bind a 1,2-diacyl-sn-glycero-3-phospho-L-serine. Position 183 (Ser183) interacts with a 1,2-diacyl-sn-glycero-3-phospho-L-serine. Residue Lys276 forms a Glycyl lysine isopeptide (Lys-Gly) (interchain with G-Cter in ubiquitin) linkage. A 1,2-diacyl-sn-glycero-3-phospho-(1D-myo-inositol 4-phosphate)-binding residues include Lys351, Glu355, and Arg359.

The protein belongs to the OSBP family. In terms of assembly, interacts with the AAA ATPase VPS4; regulates OSH7 membrane association. VPS4 is required for membrane dissociation of OSH7.

The protein resides in the cytoplasm. The protein localises to the cell membrane. Its subcellular location is the endoplasmic reticulum membrane. The catalysed reaction is a 1,2-diacyl-sn-glycero-3-phospho-L-serine(in) = a 1,2-diacyl-sn-glycero-3-phospho-L-serine(out). In terms of biological role, ipid transport protein (LTP) involved in non-vesicular transfer of lipids between membranes. Functions in phosphoinositide-coupled directional transport of various lipids by carrying the lipid molecule in a hydrophobic pocket and transferring it between membranes through the cytosol. Involved in maintenance of intracellular sterol distribution and homeostasis. Involved in lipid countertransport between the endoplasmic reticulum and the plasma membrane. Specifically exchanges phosphatidylserine with phosphatidylinositol 4-phosphate (PI4P), delivering phosphatidylserine to the PM in exchange for PI4P, which is delivered to the ER-localized PI4P phosphatase SAC1 for degradation. Thus, by maintaining a PI4P gradient at the ER/PM interface, SAC1 drives PS transport. Binds phosphatidylserine and PI4P in a mutually exclusive manner. This chain is Oxysterol-binding protein homolog 7, found in Saccharomyces cerevisiae (strain ATCC 204508 / S288c) (Baker's yeast).